Reading from the N-terminus, the 343-residue chain is Outer envelope pore protein 37, chloroplastic (343 aa).

Composition is skewed to polar residues over residues 1-11 and 23-43; these read MADPSSQNPNL and THQI…PCST. Positions 1-43 are disordered; sequence MADPSSQNPNLATPPPPSSPSPTHQIQSGTSELSPPSRPPCST. Residues 1-73 constitute a chloroplast transit peptide; the sequence is MADPSSQNPN…DSLLFLNKVS (73 aa). At 74 to 76 the chain is on the cytoplasmic side; it reads CKL. A beta stranded membrane pass occupies residues 77–86; it reads FDNLAKLKLS. Residues 87–103 lie on the Chloroplast intermembrane side of the membrane; sequence FQNNSQREISQPQVSFT. The beta stranded transmembrane segment at 104-113 threads the bilayer; sequence SKHVSVLYDV. At 114–129 the chain is on the cytoplasmic side; sequence EEKNTFIKSTLDVHPR. A beta stranded transmembrane segment spans residues 130–137; it reads LQLRALHN. The Chloroplast intermembrane portion of the chain corresponds to 138–154; sequence VKAQQGEVAMEANLTEP. A beta stranded membrane pass occupies residues 155-164; that stretch reads GYSLELSSPV. Over 165 to 169 the chain is Cytoplasmic; sequence PIGYP. Residues 170 to 178 form a beta stranded membrane-spanning segment; it reads RATLKFPLG. Over 179-219 the chain is Chloroplast intermembrane; that stretch reads EISLQEKDEEEEEKQKRTLSVNGILKRQVMNGVCTALYTDE. A beta stranded transmembrane segment spans residues 220-228; it reads ELRLRYAYK. Residues 229-230 are Cytoplasmic-facing; sequence DD. A beta stranded transmembrane segment spans residues 231 to 240; sequence ALSFIPSISL. Residue proline 241 is a topological domain, chloroplast intermembrane. The chain crosses the membrane as a beta stranded span at residues 242 to 250; sequence SNAASFAFK. At 251–257 the chain is on the cytoplasmic side; sequence RRFSPSD. A beta stranded membrane pass occupies residues 258-267; that stretch reads KLSYWYNFDS. Residues 268–269 are Chloroplast intermembrane-facing; the sequence is NM. Residues 270–279 traverse the membrane as a beta stranded segment; sequence WSAVYKRTYG. Topologically, residues 280 to 286 are cytoplasmic; the sequence is KDYKLKA. A beta stranded transmembrane segment spans residues 287–296; the sequence is GYDSDVRLGW. At 297 to 316 the chain is on the chloroplast intermembrane side; sequence ASLWVGDEAGKVKTTPMKMK. The chain crosses the membrane as a beta stranded span at residues 317–326; sequence VQFMLQVPQD. Topologically, residues 327–343 are cytoplasmic; it reads DIKSSVLMFRVKKRWDI.

Belongs to the plastid outer envelope porin OEP37 (TC 1.B.47) family. As to quaternary structure, forms an hourglass-shaped multimeric complex. Ubiquitously expressed at low levels. Mostly present in cotyledons, and accumulates in seedlings and embryos.

It is found in the plastid. It localises to the chloroplast outer membrane. Voltage-dependent peptide-sensitive high conductance rectifying cation channel with a strong affinity for TIC32 that is imported into the chloroplast. Conductance is pH-dependent decreasing with decreasing pH values. This Arabidopsis thaliana (Mouse-ear cress) protein is Outer envelope pore protein 37, chloroplastic (OEP37).